The sequence spans 1284 residues: ATP-dependent helicase fft2 (1284 aa).

Composition is skewed to polar residues over residues 1–10 and 20–57; these read MLPYNSNYLS and ENPQSEVYGSSQTGLPSSYGNPQSYGTPPVQQSSAMYG. 5 disordered regions span residues 1 to 57, 185 to 252, 317 to 339, 353 to 388, and 446 to 465; these read MLPY…AMYG, AQPP…LPPV, KQSPVASNMPTYGSSNRTVQSQK, STQASLMPSYTRKTSNASKKLTTEEDEFYDSEEEPE, and PDDVPSKPGRRGRRREKNPM. The segment covering 201-241 has biased composition (low complexity); sequence RSNSRSSARSTARSAPRSTQRSRSSSANPVTTPPVNNTLLT. Polar residues-rich tracts occupy residues 320-339 and 353-372; these read PVASNMPTYGSSNRTVQSQK and STQASLMPSYTRKTSNASKK. Serine 323 is modified (phosphoserine). Residues 376–388 are compositionally biased toward acidic residues; sequence EEDEFYDSEEEPE. Serine 383 carries the phosphoserine modification. The region spanning 562-730 is the Helicase ATP-binding domain; it reads HLLYQQKLSG…VSLLAFILPN (169 aa). ATP is bound at residue 575–582; that stretch reads DEMGLGKT. The short motif at 681–684 is the DEGH box element; sequence DEGH. Residues 816-839 form a disordered region; the sequence is QQLRRDDKRNKRSKNDEESDGKSL. The segment covering 818–831 has biased composition (basic and acidic residues); the sequence is LRRDDKRNKRSKND. Positions 928-1079 constitute a Helicase C-terminal domain; it reads VLKELLPKMK…SLSSDGKDRE (152 aa). Residues 1088-1284 are disordered; sequence DMLDEENNGN…SEVDNNAAKD (197 aa). Positions 1095-1107 are enriched in polar residues; the sequence is NGNNTKPEITGNE. Residues 1143 to 1177 are compositionally biased toward basic and acidic residues; it reads EKTDLADGDEKANIKTEMKSETVEGDNKELRETMK. The segment covering 1180–1194 has biased composition (polar residues); the sequence is NVQTDSNAAVPSSKS. 2 stretches are compositionally biased toward basic and acidic residues: residues 1243–1256 and 1266–1284; these read QLEKPEIEESKKPD and EEEKPKNKESEVDNNAAKD.

It belongs to the SNF2/RAD54 helicase family.

It is found in the cytoplasm. Its subcellular location is the nucleus. It catalyses the reaction ATP + H2O = ADP + phosphate + H(+). DNA helicase that possesses intrinsic ATP-dependent nucleosome-remodeling activity and is required for heterochromatin organization. The protein is ATP-dependent helicase fft2 (fft2) of Schizosaccharomyces pombe (strain 972 / ATCC 24843) (Fission yeast).